Consider the following 331-residue polypeptide: Aspartate carbamoyltransferase catalytic subunit (331 aa).

Residues Arg-66 and Thr-67 each contribute to the carbamoyl phosphate site. Residue Lys-94 participates in L-aspartate binding. Arg-116, His-149, and Gln-152 together coordinate carbamoyl phosphate. Residues Arg-189 and Arg-243 each coordinate L-aspartate. Gly-284 and Pro-285 together coordinate carbamoyl phosphate.

It belongs to the aspartate/ornithine carbamoyltransferase superfamily. ATCase family. As to quaternary structure, heterododecamer (2C3:3R2) of six catalytic PyrB chains organized as two trimers (C3), and six regulatory PyrI chains organized as three dimers (R2).

It carries out the reaction carbamoyl phosphate + L-aspartate = N-carbamoyl-L-aspartate + phosphate + H(+). Its pathway is pyrimidine metabolism; UMP biosynthesis via de novo pathway; (S)-dihydroorotate from bicarbonate: step 2/3. Functionally, catalyzes the condensation of carbamoyl phosphate and aspartate to form carbamoyl aspartate and inorganic phosphate, the committed step in the de novo pyrimidine nucleotide biosynthesis pathway. In Thermosynechococcus vestitus (strain NIES-2133 / IAM M-273 / BP-1), this protein is Aspartate carbamoyltransferase catalytic subunit.